The sequence spans 109 residues: DNA-binding protein MJ0691 (109 aa).

It belongs to the PDCD5 family.

The polypeptide is DNA-binding protein MJ0691 (Methanocaldococcus jannaschii (strain ATCC 43067 / DSM 2661 / JAL-1 / JCM 10045 / NBRC 100440) (Methanococcus jannaschii)).